Here is a 412-residue protein sequence, read N- to C-terminus: Inositol polyphosphate-5-phosphatase A (412 aa).

The S-farnesyl cysteine moiety is linked to residue cysteine 409. Residues 410–412 (VVQ) constitute a propeptide, removed in mature form.

This sequence belongs to the inositol 1,4,5-trisphosphate 5-phosphatase type I family. Interacts with TASOR. Post-translationally, isoprenylation at Cys-409 is required for localization at the membrane.

It is found in the cell membrane. Its subcellular location is the cell projection. The protein resides in the dendrite. The enzyme catalyses 1D-myo-inositol 1,4,5-trisphosphate + H2O = 1D-myo-inositol 1,4-bisphosphate + phosphate. It carries out the reaction 1D-myo-inositol 1,3,4,5-tetrakisphosphate + H2O = 1D-myo-inositol 1,3,4-trisphosphate + phosphate. Inhibited by EDTA and 2,3-bisphosphoglycerate. In terms of biological role, phosphatase that specifically hydrolyzes the 5-phosphate of inositol 1,4,5-trisphosphate to inositol 1,4-bisphosphate, and inositol 1,3,4,5-tetrasphosphate to inositol 1,3,4-trisphosphate. Plays a crucial role in the survival of cerebellar Purkinje cells. In Canis lupus familiaris (Dog), this protein is Inositol polyphosphate-5-phosphatase A (INPP5A).